The following is a 398-amino-acid chain: Putative F-box protein At4g17780 (398 aa).

In terms of domain architecture, F-box spans 8 to 55; the sequence is PSSIYIVADLLEDIFLRLPLKSILISKSVSKRWRSILESKTFVERRMS.

The polypeptide is Putative F-box protein At4g17780 (Arabidopsis thaliana (Mouse-ear cress)).